Reading from the N-terminus, the 438-residue chain is Adenylyltransferase and sulfurtransferase UBA4 (438 aa).

ATP is bound by residues G81, D102, 109-113, K126, and 170-171; these read SNLHR and DH. Zn(2+) contacts are provided by C212 and C215. C229 serves as the catalytic Glycyl thioester intermediate; for adenylyltransferase activity. Zn(2+) contacts are provided by C290 and C293. A Rhodanese domain is found at 340 to 436; it reads NKKKHILIDV…WSDDVDSKIP (97 aa). C396 acts as the Cysteine persulfide intermediate; for sulfurtransferase activity in catalysis.

It in the N-terminal section; belongs to the HesA/MoeB/ThiF family. UBA4 subfamily. Zn(2+) is required as a cofactor.

Its subcellular location is the cytoplasm. It is found in the cytosol. It participates in tRNA modification; 5-methoxycarbonylmethyl-2-thiouridine-tRNA biosynthesis. Plays a central role in 2-thiolation of mcm(5)S(2)U at tRNA wobble positions of cytosolic tRNA(Lys), tRNA(Glu) and tRNA(Gln). Acts by mediating the C-terminal thiocarboxylation of sulfur carrier URM1. Its N-terminus first activates URM1 as acyl-adenylate (-COAMP), then the persulfide sulfur on the catalytic cysteine is transferred to URM1 to form thiocarboxylation (-COSH) of its C-terminus. The reaction probably involves hydrogen sulfide that is generated from the persulfide intermediate and that acts as a nucleophile towards URM1. Subsequently, a transient disulfide bond is formed. Does not use thiosulfate as sulfur donor; NFS1 probably acting as a sulfur donor for thiocarboxylation reactions. Prior mcm(5) tRNA modification by the elongator complex is required for 2-thiolation. May also be involved in protein urmylation. The chain is Adenylyltransferase and sulfurtransferase UBA4 from Candida albicans (strain SC5314 / ATCC MYA-2876) (Yeast).